The sequence spans 415 residues: Serine hydroxymethyltransferase (415 aa).

(6S)-5,6,7,8-tetrahydrofolate-binding positions include leucine 117 and 121–123; that span reads GHL. Lysine 226 carries the post-translational modification N6-(pyridoxal phosphate)lysine.

Belongs to the SHMT family. In terms of assembly, homodimer. The cofactor is pyridoxal 5'-phosphate.

The protein localises to the cytoplasm. The catalysed reaction is (6R)-5,10-methylene-5,6,7,8-tetrahydrofolate + glycine + H2O = (6S)-5,6,7,8-tetrahydrofolate + L-serine. It participates in one-carbon metabolism; tetrahydrofolate interconversion. The protein operates within amino-acid biosynthesis; glycine biosynthesis; glycine from L-serine: step 1/1. In terms of biological role, catalyzes the reversible interconversion of serine and glycine with tetrahydrofolate (THF) serving as the one-carbon carrier. This reaction serves as the major source of one-carbon groups required for the biosynthesis of purines, thymidylate, methionine, and other important biomolecules. Also exhibits THF-independent aldolase activity toward beta-hydroxyamino acids, producing glycine and aldehydes, via a retro-aldol mechanism. The chain is Serine hydroxymethyltransferase from Leptospira borgpetersenii serovar Hardjo-bovis (strain JB197).